We begin with the raw amino-acid sequence, 542 residues long: uncharacterized protein (542 aa).

A disordered region spans residues Lys256 to Glu275. A compositionally biased stretch (low complexity) spans Ser258–Thr269.

This is an uncharacterized protein from Caenorhabditis elegans.